The sequence spans 61 residues: Sperm protamine P1 (61 aa).

The disordered stretch occupies residues 1-61 (MARYRHSRSR…RRYSRRRRRY (61 aa)).

This sequence belongs to the protamine P1 family. Testis.

The protein resides in the nucleus. The protein localises to the chromosome. Protamines substitute for histones in the chromatin of sperm during the haploid phase of spermatogenesis. They compact sperm DNA into a highly condensed, stable and inactive complex. This Macropus giganteus (Eastern gray kangaroo) protein is Sperm protamine P1 (PRM1).